The primary structure comprises 199 residues: FMN-dependent NADH:quinone oxidoreductase 1 (199 aa).

FMN-binding positions include Ser-10, 17–19 (SNS), and 87–90 (MYNF).

This sequence belongs to the azoreductase type 1 family. As to quaternary structure, homodimer. The cofactor is FMN.

It catalyses the reaction 2 a quinone + NADH + H(+) = 2 a 1,4-benzosemiquinone + NAD(+). The catalysed reaction is N,N-dimethyl-1,4-phenylenediamine + anthranilate + 2 NAD(+) = 2-(4-dimethylaminophenyl)diazenylbenzoate + 2 NADH + 2 H(+). Functionally, quinone reductase that provides resistance to thiol-specific stress caused by electrophilic quinones. Also exhibits azoreductase activity. Catalyzes the reductive cleavage of the azo bond in aromatic azo compounds to the corresponding amines. This Mesoplasma florum (strain ATCC 33453 / NBRC 100688 / NCTC 11704 / L1) (Acholeplasma florum) protein is FMN-dependent NADH:quinone oxidoreductase 1.